The chain runs to 524 residues: Na(+)/H(+) antiporter NhaB (524 aa).

9 consecutive transmembrane segments (helical) span residues 13–33 (FLGN…IINP), 98–118 (LLLV…LFVF), 140–160 (AFLS…SVSV), 239–259 (FFIR…LVCL), 304–324 (AIIG…VGLV), 325–345 (GLSV…HSLG), 358–378 (LTVF…TPII), 448–468 (ATPN…APLI), and 479–499 (ALPY…FLLV).

It belongs to the NhaB Na(+)/H(+) (TC 2.A.34) antiporter family.

It is found in the cell inner membrane. The enzyme catalyses 2 Na(+)(in) + 3 H(+)(out) = 2 Na(+)(out) + 3 H(+)(in). Na(+)/H(+) antiporter that extrudes sodium in exchange for external protons. The polypeptide is Na(+)/H(+) antiporter NhaB (Yersinia pseudotuberculosis serotype O:3 (strain YPIII)).